A 207-amino-acid polypeptide reads, in one-letter code: Large ribosomal subunit protein bL20 (207 aa).

The interval 117–161 is disordered; sequence QETQPQPEEKTSLQPEKVLSTELSEEKSDDTLETKPQTTQVKAKK. Basic and acidic residues predominate over residues 140–149; that stretch reads SEEKSDDTLE.

The protein belongs to the bacterial ribosomal protein bL20 family.

In terms of biological role, binds directly to 23S ribosomal RNA and is necessary for the in vitro assembly process of the 50S ribosomal subunit. It is not involved in the protein synthesizing functions of that subunit. The protein is Large ribosomal subunit protein bL20 of Onion yellows phytoplasma (strain OY-M).